We begin with the raw amino-acid sequence, 632 residues long: MAERELSVAILAAGKGTRMRSQLPKVLHKLGSLSLIERLLRTVLTLKPHRCLVVVGYEQEQVRQALREYPVEFVEQAQQLGTGHAVQQLLPVLGGFQGDLLVINGDVPLLRAETLQALVERHRQVNPEVTLLSAQVADPYGYGRVFCDAQQRVLELVEERDCTPAQRQNRRINSGVYCFHWPALAQVLPHLNRNNAQQEYYLTDAVKRVGKAIALDVADPQEIVGVNDRRQLAQAYQILQDRLKEAWMEAGVTFVDPDSSSLEETVELAPDVVIEPQTHLRGVCRIGPGTRLGPGSWIESSEIGSGCHILYSVVSHSRIGNHVWIGPYAHVRPHSQIGDHCRIGNFVETKNAQIGSHSNAAHLAYLGDAKLGSQVNIGAGTIIANYDGQQKHFTEIGDRSKTGANSVLVAPLQVGSDVTIAAGSTIPARYPLPDDCLVIARSRPVVKPGWRLGIRSSRPQEPQPMPPGSLKIYPLRLFPGQDLKQELERLARQQPLQAGFVLSAVGSLSQATLRLADQTGDHLLSERLEILALSGSLCPDGVHLHLTVADARGQTWGGHLRPGCLIYTTAEIVLADSPEYRFSRQPDPATGYLELHIQPVAGDPCWPSPPPQPQQNQQTKPEADNSRPKSLQ.

Residues M1–R229 form a pyrophosphorylase region. Residues L11–G14, K25, Q76, and G81–T82 each bind UDP-N-acetyl-alpha-D-glucosamine. Mg(2+) is bound at residue D106. Positions 143, 158, 173, and 227 each coordinate UDP-N-acetyl-alpha-D-glucosamine. N227 is a binding site for Mg(2+). The linker stretch occupies residues R230–A250. The tract at residues G251–Q632 is N-acetyltransferase. Residues R332 and K350 each contribute to the UDP-N-acetyl-alpha-D-glucosamine site. Catalysis depends on H362, which acts as the Proton acceptor. Positions 365 and 376 each coordinate UDP-N-acetyl-alpha-D-glucosamine. Acetyl-CoA is bound by residues A379, N385–Y386, A422, and R441. The interval V600–Q632 is disordered. Basic and acidic residues predominate over residues P621–Q632.

This sequence in the N-terminal section; belongs to the N-acetylglucosamine-1-phosphate uridyltransferase family. In the C-terminal section; belongs to the transferase hexapeptide repeat family. As to quaternary structure, homotrimer. Mg(2+) is required as a cofactor.

The protein resides in the cytoplasm. It catalyses the reaction alpha-D-glucosamine 1-phosphate + acetyl-CoA = N-acetyl-alpha-D-glucosamine 1-phosphate + CoA + H(+). The enzyme catalyses N-acetyl-alpha-D-glucosamine 1-phosphate + UTP + H(+) = UDP-N-acetyl-alpha-D-glucosamine + diphosphate. It functions in the pathway nucleotide-sugar biosynthesis; UDP-N-acetyl-alpha-D-glucosamine biosynthesis; N-acetyl-alpha-D-glucosamine 1-phosphate from alpha-D-glucosamine 6-phosphate (route II): step 2/2. The protein operates within nucleotide-sugar biosynthesis; UDP-N-acetyl-alpha-D-glucosamine biosynthesis; UDP-N-acetyl-alpha-D-glucosamine from N-acetyl-alpha-D-glucosamine 1-phosphate: step 1/1. Its pathway is bacterial outer membrane biogenesis; LPS lipid A biosynthesis. Its function is as follows. Catalyzes the last two sequential reactions in the de novo biosynthetic pathway for UDP-N-acetylglucosamine (UDP-GlcNAc). The C-terminal domain catalyzes the transfer of acetyl group from acetyl coenzyme A to glucosamine-1-phosphate (GlcN-1-P) to produce N-acetylglucosamine-1-phosphate (GlcNAc-1-P), which is converted into UDP-GlcNAc by the transfer of uridine 5-monophosphate (from uridine 5-triphosphate), a reaction catalyzed by the N-terminal domain. The chain is Bifunctional protein GlmU from Synechococcus sp. (strain JA-2-3B'a(2-13)) (Cyanobacteria bacterium Yellowstone B-Prime).